Reading from the N-terminus, the 473-residue chain is Photosystem II CP43 reaction center protein (473 aa).

The propeptide occupies 1 to 14; sequence MKTLYSLRRFYPVE. Position 15 is an N-acetylthreonine (Thr-15). Thr-15 is subject to Phosphothreonine. The next 5 helical transmembrane spans lie at 69-93, 134-155, 178-200, 255-275, and 291-312; these read LFEV…PHLA, LLGP…KDRN, KALY…RKIT, KPFA…LSYS, and WFNN…ASQA. Residue Glu-367 coordinates [CaMn4O5] cluster. A helical transmembrane segment spans residues 447 to 471; the sequence is RARAAAAGFEKGIDRDFEPVLSMTP.

This sequence belongs to the PsbB/PsbC family. PsbC subfamily. In terms of assembly, PSII is composed of 1 copy each of membrane proteins PsbA, PsbB, PsbC, PsbD, PsbE, PsbF, PsbH, PsbI, PsbJ, PsbK, PsbL, PsbM, PsbT, PsbX, PsbY, PsbZ, Psb30/Ycf12, at least 3 peripheral proteins of the oxygen-evolving complex and a large number of cofactors. It forms dimeric complexes. Requires Binds multiple chlorophylls and provides some of the ligands for the Ca-4Mn-5O cluster of the oxygen-evolving complex. It may also provide a ligand for a Cl- that is required for oxygen evolution. PSII binds additional chlorophylls, carotenoids and specific lipids. as cofactor.

It is found in the plastid. The protein localises to the chloroplast thylakoid membrane. In terms of biological role, one of the components of the core complex of photosystem II (PSII). It binds chlorophyll and helps catalyze the primary light-induced photochemical processes of PSII. PSII is a light-driven water:plastoquinone oxidoreductase, using light energy to abstract electrons from H(2)O, generating O(2) and a proton gradient subsequently used for ATP formation. This Drimys granadensis protein is Photosystem II CP43 reaction center protein.